The chain runs to 264 residues: Methionine aminopeptidase (264 aa).

Substrate is bound at residue histidine 79. Residues aspartate 97, aspartate 108, and histidine 171 each contribute to the a divalent metal cation site. Residue histidine 178 coordinates substrate. Positions 204 and 235 each coordinate a divalent metal cation.

This sequence belongs to the peptidase M24A family. Methionine aminopeptidase type 1 subfamily. Monomer. Co(2+) serves as cofactor. Requires Zn(2+) as cofactor. It depends on Mn(2+) as a cofactor. The cofactor is Fe(2+).

It catalyses the reaction Release of N-terminal amino acids, preferentially methionine, from peptides and arylamides.. Its function is as follows. Removes the N-terminal methionine from nascent proteins. The N-terminal methionine is often cleaved when the second residue in the primary sequence is small and uncharged (Met-Ala-, Cys, Gly, Pro, Ser, Thr, or Val). Requires deformylation of the N(alpha)-formylated initiator methionine before it can be hydrolyzed. The polypeptide is Methionine aminopeptidase (Buchnera aphidicola subsp. Acyrthosiphon pisum (strain APS) (Acyrthosiphon pisum symbiotic bacterium)).